Reading from the N-terminus, the 417-residue chain is Gamma-glutamyl phosphate reductase (417 aa).

This sequence belongs to the gamma-glutamyl phosphate reductase family.

The protein localises to the cytoplasm. It catalyses the reaction L-glutamate 5-semialdehyde + phosphate + NADP(+) = L-glutamyl 5-phosphate + NADPH + H(+). It participates in amino-acid biosynthesis; L-proline biosynthesis; L-glutamate 5-semialdehyde from L-glutamate: step 2/2. Functionally, catalyzes the NADPH-dependent reduction of L-glutamate 5-phosphate into L-glutamate 5-semialdehyde and phosphate. The product spontaneously undergoes cyclization to form 1-pyrroline-5-carboxylate. This is Gamma-glutamyl phosphate reductase from Photorhabdus laumondii subsp. laumondii (strain DSM 15139 / CIP 105565 / TT01) (Photorhabdus luminescens subsp. laumondii).